A 741-amino-acid chain; its full sequence is MAEGSFSVQSESYSVEDMDEGSDEVGEEEMVEGNDYEEFGAFGGYGTLTSFDIHILRAFGSLGPGLRILSNEPWELENPVLAQTLVEALQLDPETLANETAARAANVARAAASNRAARAAAAAARTAFSQVVASHRVATPQVSGEDTQPTTYAAEAQGPTPEPPLASPQTSQMLVTSKMAAPEAPATSAQSQTGSPAQEAATEGPSSACAFSQAPCAREVDANRPSTAFLGQNDVFDFTQPAGVSGMAFPRPKRPAPAQEAATEGPSAASGVPQTGPGREVAATRPKTTKSGKALAKTRWVEPQNVVAAAAAKAKMATSIPEPEGAAAATAQHSAEPWARMGGKRTKKSKHLDDEYESSEEERETPAVPPTWRASQPSLTVRAQLAPRPPMAPRSQIPSRHVLCLPPRNVTLLQERANKLVKYLMIKDYKKIPIKRADMLKDVIREYDEHFPEIIERATYTLEKKFGIHLKEIDKEEHLYILVCTRDSSARLLGKTKDTPRLSLLLVILGVIFMNGNRASEAVLWEALRKMGLRPGVRHPFLGDLRKLITDDFVKQKYLEYKKIPNSNPPEYEFLWGLRARHETSKMRVLRFIAQNQNRDPREWKAHFLEAVDDAFKTMDVDMAEEHARAQMRAQMNIGDEALIGRWSWDDIQVELLTWDEDGDFGDAWARIPFAFWARYHQYILNSNRANRRATWRAGVSSGTNGGASTSVLDGPSTSSTIRTRNAARAGASFFSWIQHR.

The span at 1–13 (MAEGSFSVQSESY) shows a compositional bias: polar residues. Disordered stretches follow at residues 1–27 (MAEG…EVGE), 136–206 (RVAT…EGPS), 247–296 (MAFP…KALA), and 323–379 (PEGA…QPSL). Residues 14–27 (SVEDMDEGSDEVGE) show a composition bias toward acidic residues. Polar residues-rich tracts occupy residues 140 to 151 (PQVSGEDTQPTT) and 187 to 196 (TSAQSQTGSP). A compositionally biased stretch (acidic residues) spans 354–363 (DEYESSEEER). The MAGE domain occupies 413-611 (LQERANKLVK…REWKAHFLEA (199 aa)). A disordered region spans residues 700-720 (VSSGTNGGASTSVLDGPSTSS). The span at 701–720 (SSGTNGGASTSVLDGPSTSS) shows a compositional bias: polar residues.

As to quaternary structure, interacts with TRIM27. Expressed only in brain and ovary among normal tissues. Isoform 1 and isoform 2 are specifically expressed in glioma cells among cancer cells. Detected in some renal cell carcinoma samples.

May enhance ubiquitin ligase activity of RING-type zinc finger-containing E3 ubiquitin-protein ligases. Proposed to act through recruitment and/or stabilization of the Ubl-conjugating enzyme (E2) at the E3:substrate complex. The chain is Melanoma-associated antigen D4 (MAGED4) from Homo sapiens (Human).